The chain runs to 231 residues: Potassium/proton antiporter CemA (231 aa).

4 helical membrane-spanning segments follow: residues 7-27 (FIPLLCLTSIVFLPWCISFTF), 104-124 (IHTILHFCTNIICFLILSVYS), 154-174 (ILFLIEFCVGYHSTGGWELMI), and 189-209 (IISFLVSILPAILDTIFKYWI).

It belongs to the CemA family.

It is found in the plastid. Its subcellular location is the chloroplast inner membrane. The catalysed reaction is K(+)(in) + H(+)(out) = K(+)(out) + H(+)(in). Functionally, contributes to K(+)/H(+) antiport activity by supporting proton efflux to control proton extrusion and homeostasis in chloroplasts in a light-dependent manner to modulate photosynthesis. Prevents excessive induction of non-photochemical quenching (NPQ) under continuous-light conditions. Indirectly promotes efficient inorganic carbon uptake into chloroplasts. The polypeptide is Potassium/proton antiporter CemA (Pisum sativum (Garden pea)).